The sequence spans 1067 residues: Hemoglobin and hemoglobin-haptoglobin-binding protein B (1067 aa).

Positions 1–24 are cleaved as a signal peptide; it reads MTNFKFSLLACSIAFALNASTAYA. 6 repeat units span residues 26–29, 30–33, 34–37, 38–41, 42–45, and 46–49. Positions 26 to 49 are 6 X 4 AA tandem repeats of Q-P-T-N; it reads QPTNQPTNQPTNQPTNQPTNQPTN. Over residues 26–51 the composition is skewed to low complexity; it reads QPTNQPTNQPTNQPTNQPTNQPTNQN. The segment at 26–53 is disordered; the sequence is QPTNQPTNQPTNQPTNQPTNQPTNQNSN. Residues 59-66 carry the TonB box motif; the sequence is EQINVSGS. One can recognise a TBDR plug domain in the interval 71–196; the sequence is NIKEKKVGET…LGGSVIFETK (126 aa). Positions 204-1067 constitute a TBDR beta-barrel domain; the sequence is DKDYYLSYKR…NYRMSVQFEF (864 aa). The TonB C-terminal box signature appears at 1050–1067; the sequence is NRFYAPGRNYRMSVQFEF.

It belongs to the TonB-dependent receptor family. Hemoglobin/haptoglobin binding protein subfamily.

The protein resides in the cell outer membrane. Acts as a receptor for hemoglobin or the hemoglobin/haptoglobin complex of the human host and is required for heme uptake. This is Hemoglobin and hemoglobin-haptoglobin-binding protein B (hgbB) from Haemophilus influenzae.